We begin with the raw amino-acid sequence, 147 residues long: Bis(5'-nucleosyl)-tetraphosphatase [asymmetrical] (147 aa).

The residue at position 2 (A2) is an N-acetylalanine. In terms of domain architecture, Nudix hydrolase spans 2-139 (ALRACGLIIF…EMKATLQEGH (138 aa)). Residues 43–64 (GHVDPGENDLETALRETQEETG) carry the Nudix box motif.

Belongs to the Nudix hydrolase family. A divalent metal cation serves as cofactor.

It catalyses the reaction P(1),P(4)-bis(5'-guanosyl) tetraphosphate + H2O = GMP + GTP + 2 H(+). The enzyme catalyses a 5'-end CoA-ribonucleoside in mRNA + H2O = a 5'-end phospho-adenosine-phospho-ribonucleoside in mRNA + (R)-4'-phosphopantetheine + 2 H(+). It carries out the reaction a 5'-end FAD-phospho-ribonucleoside in mRNA + H2O = a 5'-end phospho-adenosine-phospho-ribonucleoside in mRNA + FMN + 2 H(+). Catalyzes the asymmetric hydrolysis of diadenosine 5',5'''-P1,P4-tetraphosphate (Ap4A) to yield AMP and ATP. Exhibits decapping activity towards FAD-capped RNAs and dpCoA-capped RNAs in vitro. This Rattus norvegicus (Rat) protein is Bis(5'-nucleosyl)-tetraphosphatase [asymmetrical] (Nudt2).